The primary structure comprises 128 residues: UPF0325 protein CKO_03204 (128 aa).

It belongs to the UPF0325 family.

This is UPF0325 protein CKO_03204 from Citrobacter koseri (strain ATCC BAA-895 / CDC 4225-83 / SGSC4696).